A 164-amino-acid chain; its full sequence is T-cell surface glycoprotein CD3 zeta chain (164 aa).

An N-terminal signal peptide occupies residues 1–21; it reads MKWKVSVLACILHVRFPGAEA. A Blocked amino end (Gln) modification is found at Gln-22. The Extracellular portion of the chain corresponds to 22–30; the sequence is QSFGLLDPK. Residues 31–51 form a helical membrane-spanning segment; it reads LCYLLDGILFIYGVIITALYL. The Cytoplasmic portion of the chain corresponds to 52–164; that stretch reads RAKFSRSAET…ALHMQTLAPR (113 aa). Ser-58 is modified (phosphoserine). ITAM domains are found at residues 61–89, 100–128, and 131–159; these read TAAN…LEKK, QQRR…EIGT, and ERRR…LHMQ. Phosphotyrosine is present on residues Tyr-72 and Tyr-83. The segment covering 87–96 has biased composition (basic and acidic residues); the sequence is EKKRARDPEM. Residues 87 to 111 are disordered; the sequence is EKKRARDPEMGGKQQRRRNPQEGVY. A phosphotyrosine mark is found at Tyr-111, Tyr-123, Tyr-142, and Tyr-153. The tract at residues 124 to 143 is disordered; it reads SEIGTKGERRRGKGHDGLYQ.

Belongs to the CD3Z/FCER1G family. In terms of assembly, the TCR-CD3 complex is composed of a CD3D/CD3E and a CD3G/CD3E heterodimers that preferentially associate with TCRalpha and TCRbeta, respectively, to form TCRalpha/CD3E/CD3G and TCRbeta/CD3G/CD3E trimers. In turn, the hexamer interacts with CD3Z homodimer to form the TCR-CD3 complex. Alternatively, TCRalpha and TCRbeta can be replaced by TCRgamma and TCRdelta. Interacts with SLA. Interacts with SLA2. Interacts with TRAT1. Interacts with DOCK2. Interacts with SHB. Interacts with ZAP70. Interacts (tyrosine phosphorylated) with SHC1 (via SH2 domain). Interacts with PTPRC. Interacts with CRK; this interaction regulates CD3Z phosphorylation. Interacts (on T cell side) with CD81, ICAM1 and CD9 at immunological synapses between antigen-presenting cells and T cells. Interacts with CD160. Interacts with LY6E. Interacts with LY6E. The signaling subunit of immunoglobulin gamma (IgG) Fc receptor complex. As a homodimer or a heterodimer with FCER1G, associates with the ligand binding subunit FCGR3A (via transmembrane domain); this interaction is a prerequisite for Fc receptor complex expression on the cell surface. Interacts with CD5. Post-translationally, phosphorylated on Tyr residues after T-cell receptor triggering by LCK in association with CD4/CD8. In terms of tissue distribution, CD3Z is expressed in normal lymphoid tissue and in peripheral blood mononuclear cells (PBMCs). Expressed also in retinal ganglion cells.

The protein localises to the cell membrane. In terms of biological role, part of the TCR-CD3 complex present on T-lymphocyte cell surface that plays an essential role in adaptive immune response. When antigen presenting cells (APCs) activate T-cell receptor (TCR), TCR-mediated signals are transmitted across the cell membrane by the CD3 chains CD3D, CD3E, CD3G and CD3Z. All CD3 chains contain immunoreceptor tyrosine-based activation motifs (ITAMs) in their cytoplasmic domain. Upon TCR engagement, these motifs become phosphorylated by Src family protein tyrosine kinases LCK and FYN, resulting in the activation of downstream signaling pathways. CD3Z ITAMs phosphorylation creates multiple docking sites for the protein kinase ZAP70 leading to ZAP70 phosphorylation and its conversion into a catalytically active enzyme. Plays an important role in intrathymic T-cell differentiation. Additionally, participates in the activity-dependent synapse formation of retinal ganglion cells (RGCs) in both the retina and dorsal lateral geniculate nucleus (dLGN). The protein is T-cell surface glycoprotein CD3 zeta chain (Cd247) of Mus musculus (Mouse).